Consider the following 398-residue polypeptide: Lipase member N (398 aa).

The N-terminal stretch at 1–18 (MMWLLLTTTCLICGTLNA) is a signal peptide. The 301-residue stretch at 79 to 379 (PVVYMQHALF…DWNHFDFVWG (301 aa)) folds into the AB hydrolase-1 domain. Catalysis depends on S173, which acts as the Nucleophile. The cysteines at positions 247 and 256 are disulfide-linked. N272 carries N-linked (GlcNAc...) asparagine glycosylation. Active-site charge relay system residues include D344 and H373.

This sequence belongs to the AB hydrolase superfamily. Lipase family. In terms of tissue distribution, highly expressed in the epidermis in the granular keratinocytes. Also detected in other tissues, although at much lower levels, including lung and spleen.

The protein localises to the secreted. The catalysed reaction is a sterol ester + H2O = a sterol + a fatty acid + H(+). It catalyses the reaction a triacylglycerol + H2O = a 1,2-diacylglycerol + a fatty acid + H(+). It carries out the reaction a triacylglycerol + H2O = a diacylglycerol + a fatty acid + H(+). The enzyme catalyses a cholesterol ester + H2O = cholesterol + a fatty acid + H(+). Functionally, plays a highly specific role in the last step of keratinocyte differentiation. Contains two distinct domains: the alpha/beta hydrolase fold and the abhydrolase-associated lipase region, also features the consensus sequence of the active site of a genuine lipase. May have an essential function in lipid metabolism of the most differentiated epidermal layers. The polypeptide is Lipase member N (LIPN) (Homo sapiens (Human)).